The chain runs to 297 residues: Iron/alpha-ketoglutarate-dependent dioxygenase ausU (297 aa).

Residues His130, Asp132, and His206 each contribute to the Fe cation site.

It belongs to the PhyH family. In terms of assembly, homodimer. Fe cation serves as cofactor.

It functions in the pathway secondary metabolite biosynthesis; terpenoid biosynthesis. Functionally, iron/alpha-ketoglutarate-dependent dioxygenase; part of the gene cluster that mediates the biosynthesis of calidodehydroaustin, a fungal meroterpenoid. The first step of the pathway is the synthesis of 3,5-dimethylorsellinic acid by the polyketide synthase ausA. 3,5-dimethylorsellinic acid is then prenylated by the polyprenyl transferase ausN. Further epoxidation by the FAD-dependent monooxygenase ausM and cyclization by the probable terpene cyclase ausL lead to the formation of protoaustinoid A. Protoaustinoid A is then oxidized to spiro-lactone preaustinoid A3 by the combined action of the FAD-binding monooxygenases ausB and ausC, and the dioxygenase ausE. Acid-catalyzed keto-rearrangement and ring contraction of the tetraketide portion of preaustinoid A3 by ausJ lead to the formation of preaustinoid A4. The aldo-keto reductase ausK, with the help of ausH, is involved in the next step by transforming preaustinoid A4 into isoaustinone which is in turn hydroxylated by the P450 monooxygenase ausI to form austinolide. The cytochrome P450 monooxygenase ausG modifies austinolide to austinol. Austinol is further acetylated to austin by the O-acetyltransferase ausP, which spontaneously changes to dehydroaustin. The cytochrome P450 monooxygenase ausR then converts dehydroaustin is into 7-dehydrodehydroaustin. The hydroxylation catalyzed by ausR permits the O-acetyltransferase ausQ to add an additional acetyl group to the molecule, leading to the formation of acetoxydehydroaustin. The short chain dehydrogenase ausT catalyzes the reduction of the double bond present between carbon atoms 1 and 2 to convert 7-dehydrodehydroaustin into 1,2-dihydro-7-hydroxydehydroaustin. AusQ catalyzes not only an acetylation reaction but also the addition of the PKS ausV diketide product to 1,2-dihydro-7-hydroxydehydroaustin, forming precalidodehydroaustin. Finally, the iron/alpha-ketoglutarate-dependent dioxygenase converts precalidodehydroaustin into calidodehydroaustin. The polypeptide is Iron/alpha-ketoglutarate-dependent dioxygenase ausU (Aspergillus calidoustus).